The chain runs to 242 residues: Methylthioribulose-1-phosphate dehydratase (242 aa).

The disordered stretch occupies residues 1–22 (MAAASGHGLELANGGDATQDKL). Position 97 (Cys97) interacts with substrate. Zn(2+) contacts are provided by His115 and His117. The Proton donor/acceptor role is filled by Glu139. Residue His195 participates in Zn(2+) binding.

Belongs to the aldolase class II family. MtnB subfamily. The cofactor is Zn(2+).

It localises to the cytoplasm. It carries out the reaction 5-(methylsulfanyl)-D-ribulose 1-phosphate = 5-methylsulfanyl-2,3-dioxopentyl phosphate + H2O. It functions in the pathway amino-acid biosynthesis; L-methionine biosynthesis via salvage pathway; L-methionine from S-methyl-5-thio-alpha-D-ribose 1-phosphate: step 2/6. In terms of biological role, catalyzes the dehydration of methylthioribulose-1-phosphate (MTRu-1-P) into 2,3-diketo-5-methylthiopentyl-1-phosphate (DK-MTP-1-P). Functions in the methionine salvage pathway. May play a role in apoptosis. In Gallus gallus (Chicken), this protein is Methylthioribulose-1-phosphate dehydratase.